We begin with the raw amino-acid sequence, 338 residues long: Lipoate-protein ligase A (338 aa).

In terms of domain architecture, BPL/LPL catalytic spans 29-216 (PATQRVLFLW…AFFAHYGERV (188 aa)). ATP contacts are provided by residues arginine 71, 76-79 (GAVF), and lysine 134. Lysine 134 lines the (R)-lipoate pocket.

The protein belongs to the LplA family. As to quaternary structure, monomer.

It is found in the cytoplasm. It carries out the reaction L-lysyl-[lipoyl-carrier protein] + (R)-lipoate + ATP = N(6)-[(R)-lipoyl]-L-lysyl-[lipoyl-carrier protein] + AMP + diphosphate + H(+). The protein operates within protein modification; protein lipoylation via exogenous pathway; protein N(6)-(lipoyl)lysine from lipoate: step 1/2. It functions in the pathway protein modification; protein lipoylation via exogenous pathway; protein N(6)-(lipoyl)lysine from lipoate: step 2/2. Functionally, catalyzes both the ATP-dependent activation of exogenously supplied lipoate to lipoyl-AMP and the transfer of the activated lipoyl onto the lipoyl domains of lipoate-dependent enzymes. In Salmonella dublin (strain CT_02021853), this protein is Lipoate-protein ligase A.